A 423-amino-acid polypeptide reads, in one-letter code: MPEVKVPELAESITEGTIAEWLKNLGDSVEKGEAILELETDKVNVEVVSEEAGVLSEQLASEGDTVEVGQAIAVIGEGSGNASKENSNDNTPQQNDETTNNKKEETTNKSADKAEVNQTNDDNQQRVNATPSARRYARENGVNLAEVSPKTNDVVRKEDIDKKQQAPASTQTTQQAPAKEEKKYNQYPTKPVIREKMSRRKKTAAKKLLEVSNNTAMLTTFNEVDMTNVMELRKRKKEQFMKDHDGTKLGFMSFFTKASVAALKKYPEVNAEIDGDDMITKQYYDIGVAVSTDDGLLVPFVRDCDKKNFAEIEAEIANLAVKAREKKLGLDDMVNGSFTITNGGIFGSMMSTPIINGNQAAILGMHSIITRPIAIDQDTIENRPMMYIALSYDHRIIDGKEAVGFLKTIKELIENPEDLLLES.

A Lipoyl-binding domain is found at 1 to 76 (MPEVKVPELA…EVGQAIAVIG (76 aa)). Lys42 bears the N6-lipoyllysine mark. Residues 76–185 (GEGSGNASKE…APAKEEKKYN (110 aa)) form a disordered region. Residues 80 to 96 (GNASKENSNDNTPQQND) show a composition bias toward polar residues. Over residues 99 to 115 (TNNKKEETTNKSADKAE) the composition is skewed to basic and acidic residues. The segment covering 116-131 (VNQTNDDNQQRVNATP) has biased composition (polar residues). One can recognise a Peripheral subunit-binding (PSBD) domain in the interval 128–164 (NATPSARRYARENGVNLAEVSPKTNDVVRKEDIDKKQ). Residues 153-164 (DVVRKEDIDKKQ) show a composition bias toward basic and acidic residues. Low complexity predominate over residues 165-177 (QAPASTQTTQQAP). Active-site residues include His394 and Asp398.

This sequence belongs to the 2-oxoacid dehydrogenase family. Forms a 24-polypeptide structural core with octahedral symmetry. Part of the 2-oxoglutarate dehydrogenase (OGDH) complex composed of E1 (2-oxoglutarate dehydrogenase), E2 (dihydrolipoamide succinyltransferase) and E3 (dihydrolipoamide dehydrogenase); the complex contains multiple copies of the three enzymatic components (E1, E2 and E3). (R)-lipoate serves as cofactor.

It carries out the reaction N(6)-[(R)-dihydrolipoyl]-L-lysyl-[protein] + succinyl-CoA = N(6)-[(R)-S(8)-succinyldihydrolipoyl]-L-lysyl-[protein] + CoA. It participates in amino-acid degradation; L-lysine degradation via saccharopine pathway; glutaryl-CoA from L-lysine: step 6/6. Its function is as follows. E2 component of the 2-oxoglutarate dehydrogenase (OGDH) complex which catalyzes the second step in the conversion of 2-oxoglutarate to succinyl-CoA and CO(2). The polypeptide is Dihydrolipoyllysine-residue succinyltransferase component of 2-oxoglutarate dehydrogenase complex (odhB) (Staphylococcus aureus (strain MRSA252)).